The sequence spans 188 residues: Probable nicotinate-nucleotide adenylyltransferase (188 aa).

The protein belongs to the NadD family.

It catalyses the reaction nicotinate beta-D-ribonucleotide + ATP + H(+) = deamido-NAD(+) + diphosphate. It participates in cofactor biosynthesis; NAD(+) biosynthesis; deamido-NAD(+) from nicotinate D-ribonucleotide: step 1/1. Catalyzes the reversible adenylation of nicotinate mononucleotide (NaMN) to nicotinic acid adenine dinucleotide (NaAD). The polypeptide is Probable nicotinate-nucleotide adenylyltransferase (Rhizobium meliloti (strain 1021) (Ensifer meliloti)).